The following is a 176-amino-acid chain: ATP synthase subunit b, chloroplastic (176 aa).

A helical membrane pass occupies residues 19–39 (LDLLETNIINIFILIIILIYL).

Belongs to the ATPase B chain family. F-type ATPases have 2 components, F(1) - the catalytic core - and F(0) - the membrane proton channel. F(1) has five subunits: alpha(3), beta(3), gamma(1), delta(1), epsilon(1). F(0) has four main subunits: a(1), b(1), b'(1) and c(10-14). The alpha and beta chains form an alternating ring which encloses part of the gamma chain. F(1) is attached to F(0) by a central stalk formed by the gamma and epsilon chains, while a peripheral stalk is formed by the delta, b and b' chains.

It is found in the plastid. It localises to the chloroplast thylakoid membrane. In terms of biological role, f(1)F(0) ATP synthase produces ATP from ADP in the presence of a proton or sodium gradient. F-type ATPases consist of two structural domains, F(1) containing the extramembraneous catalytic core and F(0) containing the membrane proton channel, linked together by a central stalk and a peripheral stalk. During catalysis, ATP synthesis in the catalytic domain of F(1) is coupled via a rotary mechanism of the central stalk subunits to proton translocation. Component of the F(0) channel, it forms part of the peripheral stalk, linking F(1) to F(0). The chain is ATP synthase subunit b, chloroplastic from Galdieria sulphuraria (Red alga).